The following is a 221-amino-acid chain: MIVVLAESALELVPRELWNHPVIQADAKRRGKKPGEILLDRARHHLAMSSLRDASKRGRPDIVHQVLLVFQYSLLNKRGLGRIYIHTQGDYTIYVRWETRIPKNYNNFVSLMEQLYATGRVPPKGEPLIELYKKDLSTLLRELGGRWVVLHESGVKKPFIELGAALLNSVVVIGGFPHGDFTNKWVLEKADAIYKIGDETMDAAQVVYRAITAAEVAAGLL.

S-adenosyl-L-methionine is bound by residues glycine 174, glycine 179, and 196–201 (IGDETM).

The protein belongs to the class IV-like SAM-binding methyltransferase superfamily. RNA methyltransferase NEP1 family. In terms of assembly, homodimer.

The enzyme catalyses a pseudouridine in rRNA + S-adenosyl-L-methionine = an N(1)-methylpseudouridine in rRNA + S-adenosyl-L-homocysteine + H(+). Functionally, methyltransferase involved in ribosomal biogenesis. Specifically catalyzes the N1-methylation of the pseudouridine corresponding to position 914 in M.jannaschii 16S rRNA. This chain is Ribosomal RNA small subunit methyltransferase Nep1, found in Pyrobaculum islandicum (strain DSM 4184 / JCM 9189 / GEO3).